A 156-amino-acid polypeptide reads, in one-letter code: 6,7-dimethyl-8-ribityllumazine synthase (156 aa).

5-amino-6-(D-ribitylamino)uracil is bound by residues phenylalanine 23, 57-59, and 81-83; these read AYE and AVI. 86–87 contacts (2S)-2-hydroxy-3-oxobutyl phosphate; sequence ST. Residue histidine 89 is the Proton donor of the active site. Phenylalanine 114 lines the 5-amino-6-(D-ribitylamino)uracil pocket. Residue arginine 128 coordinates (2S)-2-hydroxy-3-oxobutyl phosphate.

This sequence belongs to the DMRL synthase family.

It carries out the reaction (2S)-2-hydroxy-3-oxobutyl phosphate + 5-amino-6-(D-ribitylamino)uracil = 6,7-dimethyl-8-(1-D-ribityl)lumazine + phosphate + 2 H2O + H(+). Its pathway is cofactor biosynthesis; riboflavin biosynthesis; riboflavin from 2-hydroxy-3-oxobutyl phosphate and 5-amino-6-(D-ribitylamino)uracil: step 1/2. Its function is as follows. Catalyzes the formation of 6,7-dimethyl-8-ribityllumazine by condensation of 5-amino-6-(D-ribitylamino)uracil with 3,4-dihydroxy-2-butanone 4-phosphate. This is the penultimate step in the biosynthesis of riboflavin. This is 6,7-dimethyl-8-ribityllumazine synthase from Helicobacter hepaticus (strain ATCC 51449 / 3B1).